Here is a 327-residue protein sequence, read N- to C-terminus: Leucotoxin LukD (327 aa).

A signal peptide spans 1–26; sequence MKIEKLGKSSVASSIALLLLSNTVDA.

It belongs to the aerolysin family. Toxicity requires sequential binding and synergistic association of a class S and a class F component which form heterooligomeric complexes. LukE (class S) associates with LukD (class F). LukD can also associate with HlgA.

The protein resides in the secreted. Its function is as follows. Part of a bi-component leucotoxin that acts by forming pores in the membrane of the target cells. LukE-LukD is as effective as the Panton-Valentine leucocidin (PVL) for inducing dermonecrosis when injected in the rabbit skin, but not hemolytic and poorly leucotoxic on human blood cells compared to other leucotoxins expressed by S.aureus. HlgA-LukD is a Ca(2+) channel inducer. The sequence is that of Leucotoxin LukD (lukD) from Staphylococcus aureus.